Consider the following 472-residue polypeptide: Eukaryotic translation initiation factor 2 subunit 3, X-linked (472 aa).

Ala-2 is subject to N-acetylalanine. Ser-16 is subject to Phosphoserine. The tr-type G domain maps to 39–248 (QATINIGTIG…IVKKIPVPPR (210 aa)). Residues 48–55 (GHVAHGKS) are G1. Position 51–56 (51–56 (AHGKST)) interacts with GTP. Residues 76 to 80 (NITIK) are G2. The G3 stretch occupies residues 134 to 137 (DCPG). GTP is bound by residues 190–193 (NKID) and 225–227 (SAQ). The G4 stretch occupies residues 190–193 (NKID). Positions 225 to 227 (SAQ) are G5. The segment at 457 to 469 (GQIRRGVTIKPTV) is interacts with Cdc123.

The protein belongs to the TRAFAC class translation factor GTPase superfamily. Classic translation factor GTPase family. EIF2G subfamily. In terms of assembly, eukaryotic translation initiation factor 2 eIF2 is a heterotrimeric complex composed of an alpha (EIF2S1), a beta (EIF2S2) and a gamma (EIF2S3) chain. eIF2 is member of the 43S pre-initiation complex (43S PIC). Interacts (via C-terminus) with CDC123; the interaction is direct. Widely expressed. In the brain, high mRNA levels are observed in specific regions, including the habenula, anterodorsal thalamic nucleus, hippocampus, hypothalamus, and cerebellum. Also expressed in the embryonic brain. There is a differential expression between males and females, which is tissue-specific. Females tend to have higher expression levels than males in the brain (cortex, hippocampus and paraventricular nucleus, but not in the habenula), as well as in other tissues. The up-regulation observed in females at the mRNA level may be due to the presence of 2 active copies of the gene.

It is found in the cytoplasm. The protein resides in the cytosol. It carries out the reaction GTP + H2O = GDP + phosphate + H(+). Functionally, member of the eIF2 complex that functions in the early steps of protein synthesis by forming a ternary complex with GTP and initiator tRNA. This complex binds to a 40S ribosomal subunit, followed by mRNA binding to form the 43S pre-initiation complex (43S PIC). Junction of the 60S ribosomal subunit to form the 80S initiation complex is preceded by hydrolysis of the GTP bound to eIF2 and release of an eIF2-GDP binary complex. In order for eIF2 to recycle and catalyze another round of initiation, the GDP bound to eIF2 must exchange with GTP by way of a reaction catalyzed by eIF-2B. Along with its paralog on chromosome Y, may contribute to spermatogenesis up to the round spermatid stage. This chain is Eukaryotic translation initiation factor 2 subunit 3, X-linked (Eif2s3x), found in Mus musculus (Mouse).